Consider the following 684-residue polypeptide: Protein-glutamine gamma-glutamyltransferase 4 (684 aa).

Active-site residues include cysteine 268, histidine 327, and aspartate 350. The Ca(2+) site is built by asparagine 390, aspartate 392, glutamate 442, and glutamate 447.

Belongs to the transglutaminase superfamily. Transglutaminase family. In terms of assembly, homodimer. Ca(2+) is required as a cofactor. Prostate.

It catalyses the reaction L-glutaminyl-[protein] + L-lysyl-[protein] = [protein]-L-lysyl-N(6)-5-L-glutamyl-[protein] + NH4(+). Functionally, associated with the mammalian reproductive process. Catalyzes the cross-linking of proteins and the conjugation of polyamines to specific proteins in the seminal tract. The polypeptide is Protein-glutamine gamma-glutamyltransferase 4 (TGM4) (Homo sapiens (Human)).